The following is a 165-amino-acid chain: Phosphopantetheine adenylyltransferase (165 aa).

Threonine 9 is a substrate binding site. ATP is bound by residues 9–10 and histidine 17; that span reads TF. 3 residues coordinate substrate: lysine 41, leucine 73, and arginine 87. ATP-binding positions include 88 to 90, glutamate 98, and 123 to 129; these read GLR and YMFISAT.

It belongs to the bacterial CoaD family. In terms of assembly, homohexamer. It depends on Mg(2+) as a cofactor.

Its subcellular location is the cytoplasm. It catalyses the reaction (R)-4'-phosphopantetheine + ATP + H(+) = 3'-dephospho-CoA + diphosphate. It functions in the pathway cofactor biosynthesis; coenzyme A biosynthesis; CoA from (R)-pantothenate: step 4/5. Reversibly transfers an adenylyl group from ATP to 4'-phosphopantetheine, yielding dephospho-CoA (dPCoA) and pyrophosphate. This is Phosphopantetheine adenylyltransferase from Nitrosospira multiformis (strain ATCC 25196 / NCIMB 11849 / C 71).